We begin with the raw amino-acid sequence, 466 residues long: 55 kDa erythrocyte membrane protein (466 aa).

Threonine 2 is modified (N-acetylthreonine). A phosphoserine mark is found at serine 13 and serine 19. Threonine 49 is modified (phosphothreonine). Phosphoserine occurs at positions 52, 57, and 110. The PDZ domain maps to 71-152 (LIQIEKVTEE…MISLKVIPNQ (82 aa)). Residues 158-228 (ALQMFMRAQF…PSPELQEWRV (71 aa)) enclose the SH3 domain. Serine 243 is subject to Phosphoserine. Positions 268–466 (VVSYEEVVRL…PQWVPVSWVY (199 aa)) are interaction with PALS1. The 170-residue stretch at 282–451 (RKTLVLIGAS…TLKKLQEAFD (170 aa)) folds into the Guanylate kinase-like domain.

It belongs to the MAGUK family. Heterodimer with PALS1. Interacts with DLG5 and NF2. Interacts (via guanylate kinase-like domain) with WHRN (via third PDZ domain). In terms of processing, palmitoylated.

It is found in the cell membrane. The protein resides in the cell projection. It localises to the stereocilium. Functionally, essential regulator of neutrophil polarity. Regulates neutrophil polarization by regulating AKT1 phosphorylation through a mechanism that is independent of PIK3CG activity. The sequence is that of 55 kDa erythrocyte membrane protein (MPP1) from Papio anubis (Olive baboon).